We begin with the raw amino-acid sequence, 385 residues long: MINTVCMKTTRILRLHLTNASLIPPGIKMLSDPRSRMISTHESQKLREYYRLLNLDEGCSVDDVRESFHKLARQYHPDSGSSDADSATFIKIEEAYRNVLSHAIKRMHAGQDKAEDAAEDEEEGKFKYNTPQHRHYLSFEGVGFGTPSQREKQYRQFRADRATEQVMEYQRQKLQREFFANSITVKDVRQSKQQKITQAIERLVEDLIQESMAKGDFDNLSGKGKPLKKFSGCSYIDPMTHNLNRILIDNGYQPEWILMQKEIKDTIEQLREALLMSRKKLGNPLSPTEQKQWAQVCEQFQEKIRKLNKRINDFNLIVPILTRQKVHFDAQKEIIRVQEMYGAFVEANEVTEENQTDVSQGEESKTPRVKAGFLNWLNLWKSIKI.

In terms of domain architecture, J spans 48–132; the sequence is EYYRLLNLDE…EGKFKYNTPQ (85 aa). Residues 261–318 are a coiled coil; the sequence is KEIKDTIEQLREALLMSRKKLGNPLSPTEQKQWAQVCEQFQEKIRKLNKRINDFNLIV.

Its function is as follows. May have a role in protein folding or as a chaperone. The chain is DnaJ homolog subfamily C member 28 (Dnajc28) from Mus musculus (Mouse).